Here is a 174-residue protein sequence, read N- to C-terminus: Neuromedin-U (174 aa).

The first 37 residues, 1-37 (MSRAAGHRPGLSAGQLAAATASPLLSLLLLLACCADA), serve as a signal peptide directing secretion. Residues 38-105 (CKGVPISPQR…EQSEKDNTKR (68 aa)) constitute a propeptide that is removed on maturation. M141 carries the post-translational modification Methionine sulfoxide; partial. At N166 the chain carries Asparagine amide. Residues 170 to 174 (STSFI) constitute a propeptide that is removed on maturation.

Belongs to the NmU family.

Its subcellular location is the secreted. In terms of biological role, ligand for receptors NMUR1 and NMUR2. Stimulates muscle contractions of specific regions of the gastrointestinal tract. Its function is as follows. Does not function as a ligand for either NMUR1 or NMUR2. Indirectly induces prolactin release although its potency is much lower than that of neuromedin precursor-related peptide 36. Functionally, does not function as a ligand for either NMUR1 or NMUR2. Indirectly induces prolactin release from lactotroph cells in the pituitary gland, probably via the hypothalamic dopaminergic system. Stimulates muscle contractions of specific regions of the gastrointestinal tract. The protein is Neuromedin-U (Nmu) of Mus musculus (Mouse).